The sequence spans 928 residues: MSRRVRQRVEDNGKYKVDSPSYTVIGVEDLAPKVQQYVNWTSLPYDTVFHLFTRLNYRDRASLASTCRTWRSLGASSFLWSSLDLRAHKFDLSMAASLATRCVDLQKIRFRGVDSADAIIHLKARSLLEISGDYCRKITDATLSMIAARHEALESLQLGPDFCERITSDAIRVIAFCCPKLKKLRVSGMRDVSSEAIESLAKHCPQLSDLGFLDCLNINEEALGKVVSLRYLSVAGTSNIKWKVALENWEKLPKLIGLDVSRTTIDHIAVSRLLKSSQSLKVLCALNCPYLEEDKSYSSNRFKGKVLLAVFTDTFDELASIFADNSKKPKNIFSYWRDLIRKDKSIDEIMLWIEWIISHTLLRIAESSNSQGLNDFWLNQGATLLLSLMQSAQEDVQERAATGLATFIVVDDENASIDCGRAEAVMRDGGIRLLLELAKSWREGLQSEAAKAIANLSVNAKVAKAVAEEGGISVLADLAKSMNRLVAEEAAGGLWNLSVGEEHKNAIAQAGGVNALVDLIFRWPHGCDGVLERAAGALANLAADDKCSMEVARAGGVHALVMLARNCKYEGAQEQAARALANLAAHGDSNGNNAAVGQEAGALEALVQLTQSPHEGVKQEAAGALWNLAFDDKNRESIAAFGGVEALVALAKSSSNASTGLQERVAGALWGLSVSEANSIAIGHEGGIPPLIALVRSEAEDVHETAAGALWNLSFNPGNALRIVEEGGVVALVQLCSSSVSKMARFMAALALAYMFDGRMDEYAMIGTSLESTSKSVTLNGARTMALDQIKAFIKTFMEHQIFSTGALSSAPSMLAQVSERARIPEAGHLRCSGSEIGRFVTMLRNPCLVLRACAAFALLQFTIPESRHAMHHASLMQNAGEARGLRSAAAAASMPREAKIFMKIVLRNLEHQQAESPEGMKVSYNRI.

A Nuclear localization signal motif is present at residues 3-8 (RRVRQR). An F-box domain is found at 37 to 83 (YVNWTSLPYDTVFHLFTRLNYRDRASLASTCRTWRSLGASSFLWSSL). ARM repeat units follow at residues 147–186 (AARHEALESLQLGPDFCERITSDAIRVIAFCCPKLKKLRV), 237–278 (TSNI…KSSQ), 303–341 (KGKVLLAVFTDTFDELASIFADNSKKPKNIFSYWRDLIR), 370–409 (SQGLNDFWLNQGATLLLSLMQSAQEDVQERAATGLATFIV), 419–458 (CGRAEAVMRDGGIRLLLELAKSWREGLQSEAAKAIANLSV), 460–499 (AKVAKAVAEEGGISVLADLAKSMNRLVAEEAAGGLWNLSV), 501–543 (EEHK…NLAA), 545–585 (DKCS…NLAA), 591–630 (GNNAAVGQEAGALEALVQLTQSPHEGVKQEAAGALWNLAF), 632–674 (DKNR…GLSV), 676–715 (EANSIAIGHEGGIPPLIALVRSEAEDVHETAAGALWNLSF), 717–757 (PGNA…YMFD), and 824–864 (IPEA…QFTI).

This sequence belongs to the beta-catenin family. Expressed ubiquitously.

It is found in the nucleus. Promotes lateral root initiation and development, independently of auxin (IAA) and abscisis acid (ABA). The chain is Protein ARABIDILLO 2 from Arabidopsis thaliana (Mouse-ear cress).